The chain runs to 462 residues: tRNA modification GTPase MnmE (462 aa).

(6S)-5-formyl-5,6,7,8-tetrahydrofolate is bound by residues arginine 23, glutamate 88, and arginine 127. Positions 224–383 constitute a TrmE-type G domain; the sequence is GLATVIIGRP…LEKAIADLFF (160 aa). K(+) is bound at residue asparagine 234. GTP-binding positions include 234–239, 253–259, and 278–281; these read NVGKSS, TDIPGTT, and DTAG. Serine 238 serves as a coordination point for Mg(2+). K(+)-binding residues include threonine 253, isoleucine 255, and threonine 258. Threonine 259 contributes to the Mg(2+) binding site. Position 462 (lysine 462) interacts with (6S)-5-formyl-5,6,7,8-tetrahydrofolate.

It belongs to the TRAFAC class TrmE-Era-EngA-EngB-Septin-like GTPase superfamily. TrmE GTPase family. Homodimer. Heterotetramer of two MnmE and two MnmG subunits. The cofactor is K(+).

Its subcellular location is the cytoplasm. Its function is as follows. Exhibits a very high intrinsic GTPase hydrolysis rate. Involved in the addition of a carboxymethylaminomethyl (cmnm) group at the wobble position (U34) of certain tRNAs, forming tRNA-cmnm(5)s(2)U34. The polypeptide is tRNA modification GTPase MnmE (Geobacillus kaustophilus (strain HTA426)).